Here is a 155-residue protein sequence, read N- to C-terminus: Mitochondrial import protein 1 (155 aa).

This sequence belongs to the MIM1 family.

Its subcellular location is the mitochondrion outer membrane. Required for the assembly of the TOM (translocase of outer membrane) receptor complex, which is responsible for the recognition and translocation of cytosolically synthesized mitochondrial preproteins. This Eremothecium gossypii (strain ATCC 10895 / CBS 109.51 / FGSC 9923 / NRRL Y-1056) (Yeast) protein is Mitochondrial import protein 1.